A 757-amino-acid polypeptide reads, in one-letter code: Endosialin (757 aa).

The N-terminal stretch at 1-17 is a signal peptide; that stretch reads MLLRLLLAWAAAGPTLG. The Extracellular segment spans residues 18–687; that stretch reads QDPWAAEPRA…EHSQRDDRWL (670 aa). One can recognise a C-type lectin domain in the interval 30 to 156; sequence GPSSCYALFP…CTLAVDGYLC (127 aa). The O-linked (GalNAc...) threonine glycan is linked to Thr-60. A disulfide bond links Cys-131 and Cys-147. The Sushi domain occupies 162–232; it reads GACPALQDEA…WSRAGPLCLG (71 aa). Residues 312–351 enclose the EGF-like; calcium-binding domain; it reads DTDECQIAGVCQQMCVNYVGGFECYCSEGHELEADGISCS. Cystine bridges form between Cys-316/Cys-326, Cys-322/Cys-335, and Cys-337/Cys-350. Residues Thr-401, Thr-428, Thr-448, Thr-456, Thr-459, Thr-472, Thr-519, Thr-541, Thr-543, Thr-544, Thr-545, Thr-587, Thr-593, Thr-594, and Thr-595 are each glycosylated (O-linked (GalNAc...) threonine). Residues Ser-598 and Ser-601 are each glycosylated (O-linked (GalNAc...) serine). Residues Thr-612 and Thr-619 are each glycosylated (O-linked (GalNAc...) threonine). Residues 618-627 are compositionally biased toward low complexity; sequence PTLLPSQSPT. Residues 618-662 form a disordered region; the sequence is PTLLPSQSPTNQTSPISPTHPHSKAPQIPREDGPSPKLALWLPSP. Ser-623 and Ser-625 each carry an O-linked (GalNAc...) serine glycan. 2 O-linked (GalNAc...) threonine glycosylation sites follow: Thr-627 and Thr-630. O-linked (GalNAc...) serine glycosylation is present at Ser-631. Thr-636 carries O-linked (GalNAc...) threonine glycosylation. Residue Ser-640 is glycosylated (O-linked (GalNAc...) serine). The helical transmembrane segment at 688–708 threads the bilayer; sequence LVALLVPTCVFLVVLLALGIV. The Cytoplasmic portion of the chain corresponds to 709–757; that stretch reads YCTRCGPHAPNKRITDCYRWVIHAGSKSPTEPMPPRGSLTGVQTCRTSV. Positions 737 to 757 are disordered; that stretch reads PTEPMPPRGSLTGVQTCRTSV. Ser-746 carries the post-translational modification Phosphoserine. Residues 748–757 show a composition bias toward polar residues; that stretch reads TGVQTCRTSV.

As to quaternary structure, interacts with PDGFRA; this interaction promotes PDGF receptor signaling pathway. Interacts with integrin beta-1/ITGB1. Interacts with insulin receptor/INSR; this interaction diminishes INSR autophosphorylation. Post-translationally, O-glycosylated with sialylated oligosaccharides. May be N-glycosylated. In terms of tissue distribution, expressed in tumor endothelial cells but absent or barely detectable in normal endothelial cells. Expressed in metastatic lesions of the liver and during angiogenesis of corpus luteum formation and wound healing. Expressed in vascular endothelial cells of malignant tumors but not in normal blood vessels. Expressed in stromal fibroblasts. Strongly expressed in pericytes. Expressed on stromal cells and cells with lymphoid morphology such a T-cells.

It localises to the membrane. Functionally, cell surface glycoprotein involved in various biological processes including angiogenesis, immune response modulation, and tissue remodeling and repair. Participates in pericyte proliferation through positive modulation of the PDGF receptor signaling pathway. Acts as a scaffold for factor X, triggering allosteric changes and the spatial re-alignment of factor X with the TF-factor VIIa complex, thereby enhancing coagulation activation. Modulates the insulin signaling pathway by interacting with insulin receptor/INSR and by diminishing its capacity to be autophosphorylated in response to insulin. Also regulates LPS-induced inflammatory response in macrophages by favoring the production of proinflammatory cytokines. In human, negatively regulates T-cell proliferation compared with stromal cells where it increases proliferation. The protein is Endosialin (CD248) of Homo sapiens (Human).